The chain runs to 204 residues: 8-oxoguanine DNA glycosylase/AP lyase (204 aa).

Active-site residues include K128 and D146.

The protein belongs to the type-2 OGG1 family.

It carries out the reaction 2'-deoxyribonucleotide-(2'-deoxyribose 5'-phosphate)-2'-deoxyribonucleotide-DNA = a 3'-end 2'-deoxyribonucleotide-(2,3-dehydro-2,3-deoxyribose 5'-phosphate)-DNA + a 5'-end 5'-phospho-2'-deoxyribonucleoside-DNA + H(+). Its function is as follows. Catalyzes the excision of an oxidatively damaged form of guanine (7,8-dihydro-8-oxoguanine = 8-oxoG) from DNA. Also cleaves the DNA backbone at apurinic/apyrimidinic sites (AP sites). The protein is 8-oxoguanine DNA glycosylase/AP lyase of Sulfurisphaera tokodaii (strain DSM 16993 / JCM 10545 / NBRC 100140 / 7) (Sulfolobus tokodaii).